A 383-amino-acid polypeptide reads, in one-letter code: Protein transport protein SEC20 (383 aa).

Residues 1–275 lie on the Cytoplasmic side of the membrane; it reads MVVTFLQDLE…ENASHQEKRD (275 aa). The stretch at 6–26 forms a coiled coil; sequence LQDLEVLQDALLNNLQKLSAI. The chain crosses the membrane as a helical; Anchor for type IV membrane protein span at residues 276-292; it reads VYLSLGFLLCCVSWVLW. Over 293-383 the chain is Lumenal; that stretch reads RRIFKLPVKL…VDRIVSHDEL (91 aa). The Prevents secretion from ER signature appears at 380–383; that stretch reads HDEL.

The protein belongs to the SEC20 family. Component of a SNARE complex consisting of UFE1, USE1, SEC20 and SEC22 or YKT6. Interacts with TIP20 through its cytoplasmic domain. O-glycosylated, but not N-glycosylated.

It localises to the endoplasmic reticulum membrane. In terms of biological role, SNARE required for targeting and fusion of Golgi-derived retrograde transport vesicles with the ER. In Saccharomyces cerevisiae (strain ATCC 204508 / S288c) (Baker's yeast), this protein is Protein transport protein SEC20 (SEC20).